Reading from the N-terminus, the 402-residue chain is Serine/threonine transporter SstT (402 aa).

A run of 9 helical transmembrane segments spans residues 19-39 (IGVV…AIGL), 43-63 (LFVG…VISA), 86-106 (TFAA…TLIL), 138-158 (AITE…GLAM), 179-199 (VVKW…FTSI), 212-232 (LLIL…NPII), 287-307 (IPLG…ILTL), 327-347 (VVAA…LLLI), and 354-374 (FGIS…VGVI).

It belongs to the dicarboxylate/amino acid:cation symporter (DAACS) (TC 2.A.23) family.

It is found in the cell membrane. The enzyme catalyses L-serine(in) + Na(+)(in) = L-serine(out) + Na(+)(out). It carries out the reaction L-threonine(in) + Na(+)(in) = L-threonine(out) + Na(+)(out). Its function is as follows. Involved in the import of serine and threonine into the cell, with the concomitant import of sodium (symport system). This Streptococcus agalactiae serotype Ia (strain ATCC 27591 / A909 / CDC SS700) protein is Serine/threonine transporter SstT.